Reading from the N-terminus, the 541-residue chain is Valine N-monooxygenase 2 (541 aa).

Over methionine 1–threonine 18 the chain is Cytoplasmic. The helical transmembrane segment at serine 19 to isoleucine 41 threads the bilayer. Residues lysine 42 to proline 541 are Lumenal-facing. A glycan (N-linked (GlcNAc...) asparagine) is linked at asparagine 277. Residue cysteine 477 participates in heme binding. Asparagine 505 carries an N-linked (GlcNAc...) asparagine glycan.

This sequence belongs to the cytochrome P450 family. Heme serves as cofactor. Expressed in the epidermis, the next two cortex cell layers, the endodermis and the pericycle of leaf petioles. Strong expression around the laticifers among the phloem cells and in parenchymatic cells between the protoxylem and the metaxylem cells. In the leaves, preferentially expressed in the mesophyll cells adjacent to the epidermis.

It is found in the microsome membrane. It carries out the reaction L-valine + 2 reduced [NADPH--hemoprotein reductase] + 2 O2 = (E)-2-methylpropanal oxime + 2 oxidized [NADPH--hemoprotein reductase] + CO2 + 3 H2O + 2 H(+). The catalysed reaction is L-valine + reduced [NADPH--hemoprotein reductase] + O2 = N-hydroxy-L-valine + oxidized [NADPH--hemoprotein reductase] + H2O + 2 H(+). The enzyme catalyses N-hydroxy-L-valine + reduced [NADPH--hemoprotein reductase] + O2 = N,N-dihydroxy-L-valine + oxidized [NADPH--hemoprotein reductase] + H2O + H(+). It catalyses the reaction L-isoleucine + 2 reduced [NADPH--hemoprotein reductase] + 2 O2 = (1E,2S)-2-methylbutanal oxime + 2 oxidized [NADPH--hemoprotein reductase] + CO2 + 3 H2O + 2 H(+). It carries out the reaction L-isoleucine + reduced [NADPH--hemoprotein reductase] + O2 = N-hydroxy-L-isoleucine + oxidized [NADPH--hemoprotein reductase] + H2O + 2 H(+). The catalysed reaction is N-hydroxy-L-isoleucine + reduced [NADPH--hemoprotein reductase] + O2 = N,N-dihydroxy-L-isoleucine + oxidized [NADPH--hemoprotein reductase] + H2O + H(+). In terms of biological role, involved in the biosynthesis of the cyanogenic glucosides linamarin and lotaustralin. Can use L-valine or L-isoleucine as substrate. Catalyzes multi-step reactions starting with two successive N-hydroxylations using L-valine and L-isoleucine as substrates leading to the formation of N,N-dihydroxy-L-valine and N,N-dihydroxy-L-isoleucine, respectively; following spontaneous reactions lead to the production of (E)-2-methylpropanal oxime and (1E,2S)-2-methylbutanal oxime, respectively. The polypeptide is Valine N-monooxygenase 2 (Manihot esculenta (Cassava)).